The sequence spans 595 residues: Chaperone protein HscA homolog (595 aa).

This sequence belongs to the heat shock protein 70 family.

In terms of biological role, chaperone involved in the maturation of iron-sulfur cluster-containing proteins. Has a low intrinsic ATPase activity which is markedly stimulated by HscB. This Rickettsia peacockii (strain Rustic) protein is Chaperone protein HscA homolog.